We begin with the raw amino-acid sequence, 252 residues long: 3-dehydroquinate dehydratase (252 aa).

3-dehydroquinate-binding positions include 46 to 48 and arginine 82; that span reads EWR. Histidine 143 serves as the catalytic Proton donor/acceptor. Residue lysine 170 is the Schiff-base intermediate with substrate of the active site. Residues arginine 212, serine 231, and glutamine 235 each contribute to the 3-dehydroquinate site.

Belongs to the type-I 3-dehydroquinase family. In terms of assembly, homodimer.

It carries out the reaction 3-dehydroquinate = 3-dehydroshikimate + H2O. It participates in metabolic intermediate biosynthesis; chorismate biosynthesis; chorismate from D-erythrose 4-phosphate and phosphoenolpyruvate: step 3/7. Its function is as follows. Involved in the third step of the chorismate pathway, which leads to the biosynthesis of aromatic amino acids. Catalyzes the cis-dehydration of 3-dehydroquinate (DHQ) and introduces the first double bond of the aromatic ring to yield 3-dehydroshikimate. This chain is 3-dehydroquinate dehydratase, found in Listeria innocua serovar 6a (strain ATCC BAA-680 / CLIP 11262).